Reading from the N-terminus, the 1413-residue chain is DNA-directed RNA polymerase subunit beta' (1413 aa).

Positions 70, 72, 85, and 88 each coordinate Zn(2+). Residues aspartate 460, aspartate 462, and aspartate 464 each coordinate Mg(2+). Zn(2+) contacts are provided by cysteine 814, cysteine 888, cysteine 895, and cysteine 898.

This sequence belongs to the RNA polymerase beta' chain family. As to quaternary structure, the RNAP catalytic core consists of 2 alpha, 1 beta, 1 beta' and 1 omega subunit. When a sigma factor is associated with the core the holoenzyme is formed, which can initiate transcription. The cofactor is Mg(2+). Requires Zn(2+) as cofactor.

It carries out the reaction RNA(n) + a ribonucleoside 5'-triphosphate = RNA(n+1) + diphosphate. In terms of biological role, DNA-dependent RNA polymerase catalyzes the transcription of DNA into RNA using the four ribonucleoside triphosphates as substrates. In Bordetella avium (strain 197N), this protein is DNA-directed RNA polymerase subunit beta'.